We begin with the raw amino-acid sequence, 385 residues long: Calcium/calmodulin-dependent protein kinase type 1D (385 aa).

Positions F23–I279 constitute a Protein kinase domain. ATP-binding positions include L29–V37 and K52. K113 participates in a covalent cross-link: Glycyl lysine isopeptide (Lys-Gly) (interchain with G-Cter in SUMO2). S122 carries the phosphoserine modification. D144 serves as the catalytic Proton acceptor. Phosphothreonine; by CaMKK1 and CaMKK2 is present on T180. Positions I279–M319 are autoinhibitory domain. The calmodulin-binding stretch occupies residues K299–R320. Residues H318 to L324 carry the Nuclear export signal motif. Positions V363–K385 are disordered. Over residues T375 to K385 the composition is skewed to polar residues.

This sequence belongs to the protein kinase superfamily. CAMK Ser/Thr protein kinase family. CaMK subfamily. In terms of tissue distribution, expressed ubiquitously with high levels in brain and low levels in kidney. Isoform 2 is highly expressed in brain compared to other tissues. In hematopoietic cell lines predominant expression was detected in T and EC cells.

It localises to the cytoplasm. Its subcellular location is the nucleus. The enzyme catalyses L-seryl-[protein] + ATP = O-phospho-L-seryl-[protein] + ADP + H(+). It catalyses the reaction L-threonyl-[protein] + ATP = O-phospho-L-threonyl-[protein] + ADP + H(+). With respect to regulation, activated by Ca(2+)/calmodulin. Binding of calmodulin results in conformational change that relieves intrasteric autoinhibition and allows phosphorylation of Thr-180 within the activation loop by CaMKK1 or CaMKK2. Phosphorylation of Thr-180 results in several fold increase in total activity. Unlike CaMK4, may be unable to exhibit autonomous activity after Ca(2+)/calmodulin activation. Functionally, calcium/calmodulin-dependent protein kinase that operates in the calcium-triggered CaMKK-CaMK1 signaling cascade and, upon calcium influx, activates CREB-dependent gene transcription, regulates calcium-mediated granulocyte function and respiratory burst and promotes basal dendritic growth of hippocampal neurons. In neutrophil cells, required for cytokine-induced proliferative responses and activation of the respiratory burst. Activates the transcription factor CREB1 in hippocampal neuron nuclei. May play a role in apoptosis of erythroleukemia cells. In vitro, phosphorylates transcription factor CREM isoform Beta. Isoform 1 but not isoform 2 activates CREB1. The protein is Calcium/calmodulin-dependent protein kinase type 1D (Camk1d) of Mus musculus (Mouse).